The sequence spans 60 residues: Cecropin-B type 1 (60 aa).

The signal sequence occupies residues 1–24 (MNFNKLFALVLLIGLVLLTGQTEA). Ile-58 is subject to Isoleucine amide.

It belongs to the cecropin family.

Its subcellular location is the secreted. Functionally, cecropins have lytic and antibacterial activity against several Gram-positive and Gram-negative bacteria. The sequence is that of Cecropin-B type 1 (CECB1) from Aedes albopictus (Asian tiger mosquito).